A 386-amino-acid chain; its full sequence is MPFKGLVVQVADPQTLDKIIDKTLDTVGKSREQIFEISEQSRNEYVSLEQELQEVRMKVAEIIDQSDRAEVHARFARNRLAEVSKQFHRYSNEEIRKVYEQANELQVKLALLQQEEQQLRDRRDAIERRLLNLKDTIERAEELVGQMTVVYNFLTGDLRQVGEALEDAREKQAFGLQIIQAQEEERRKLSREIHDGPAQMMANVLLRSELVERIYHDKGIDEALKEIRDLRKMVKSSLAEVRRIIYDLRRMALDDLGLIPTLKKYVKTFEEHTGIFVDFKHIGKGERFPEHVEIALFRLVQEALQNTRKHAKASHVHVKIEEQKTKFTVVIKDNGKGFDQTEKKEGSFGLVGMKERVNMLKGQLVIRTKPNDGTTIIISIPITTEE.

Residues 188–384 (KLSREIHDGP…TIIISIPITT (197 aa)) enclose the Histidine kinase domain. A Phosphohistidine; by autocatalysis modification is found at His194.

Autophosphorylated.

Its subcellular location is the cytoplasm. It carries out the reaction ATP + protein L-histidine = ADP + protein N-phospho-L-histidine.. Its function is as follows. Member of the two-component regulatory system DegS/DegU, which plays an important role in the transition growth phase. Acts as both a protein kinase that undergoes autophosphorylation and subsequently transfers the phosphate to DegU, and a protein phosphatase that dephosphorylates phospho-DegU. The sequence is that of Signal transduction histidine-protein kinase/phosphatase DegS (degS) from Brevibacillus brevis (Bacillus brevis).